The primary structure comprises 302 residues: tRNA pseudouridine synthase B (302 aa).

The active-site Nucleophile is the aspartate 42.

It belongs to the pseudouridine synthase TruB family. Type 1 subfamily.

It catalyses the reaction uridine(55) in tRNA = pseudouridine(55) in tRNA. Its function is as follows. Responsible for synthesis of pseudouridine from uracil-55 in the psi GC loop of transfer RNAs. In Leifsonia xyli subsp. xyli (strain CTCB07), this protein is tRNA pseudouridine synthase B.